Consider the following 230-residue polypeptide: Probable methylthioribulose-1-phosphate dehydratase (230 aa).

Cysteine 87 contributes to the substrate binding site. Residues histidine 105 and histidine 107 each contribute to the Zn(2+) site. The Proton donor/acceptor role is filled by glutamate 129. Zn(2+) is bound at residue histidine 185.

The protein belongs to the aldolase class II family. MtnB subfamily. Requires Zn(2+) as cofactor.

It is found in the cytoplasm. The enzyme catalyses 5-(methylsulfanyl)-D-ribulose 1-phosphate = 5-methylsulfanyl-2,3-dioxopentyl phosphate + H2O. It functions in the pathway amino-acid biosynthesis; L-methionine biosynthesis via salvage pathway; L-methionine from S-methyl-5-thio-alpha-D-ribose 1-phosphate: step 2/6. Functionally, catalyzes the dehydration of methylthioribulose-1-phosphate (MTRu-1-P) into 2,3-diketo-5-methylthiopentyl-1-phosphate (DK-MTP-1-P). This Drosophila virilis (Fruit fly) protein is Probable methylthioribulose-1-phosphate dehydratase.